A 537-amino-acid chain; its full sequence is Cytochrome c oxidase subunit 1 (537 aa).

The chain crosses the membrane as a helical span at residues 22 to 42 (ILYLLFGLVSGIIGSVFSFII). Ca(2+)-binding residues include E45, A48, and G50. H68 lines the Fe(II)-heme a pocket. 8 helical membrane passes run 70–90 (ILMIFFFIIPALFGAFGNYLV), 104–124 (VNNFTFWLLPPALMLLLISAL), 152–172 (LAILSLQLTGISSTLGSVNLI), 190–210 (LFAWAIMITSILLLLTLPVLA), 241–261 (LFWFFGHPEVYILIMPAFGVV), 279–299 (MLWAMLSIALLGLMVWSHHLF), 318–338 (IAIPTGIKIFSWLATLTGGAI), and 345–365 (MLYAIGFLILFTIGGLTGVIL). Residue H247 participates in Cu cation binding. Residues 247-251 (HPEVY) constitute a cross-link (1'-histidyl-3'-tyrosine (His-Tyr)). Y251 provides a ligand contact to O2. H296 and H297 together coordinate Cu cation. 2 residues coordinate Mg(2+): H375 and D376. The next 2 helical transmembrane spans lie at 379 to 399 (FVVAHFHYVLSMGALFGLCGA) and 418 to 438 (IQFWILFIGVNIVFGPQHFLG). Residue H383 participates in heme a3 binding. H385 provides a ligand contact to Fe(II)-heme a. Residue P447 participates in Ca(2+) binding. The helical transmembrane segment at 458-478 (FVSSIGSVISILSLFLFMYVM) threads the bilayer.

It belongs to the heme-copper respiratory oxidase family. Component of the cytochrome c oxidase (complex IV, CIV), a multisubunit enzyme composed of a catalytic core of 3 subunits and several supernumerary subunits. The complex exists as a monomer or a dimer and forms supercomplexes (SCs) in the inner mitochondrial membrane with ubiquinol-cytochrome c oxidoreductase (cytochrome b-c1 complex, complex III, CIII). It depends on heme as a cofactor. Cu cation serves as cofactor.

The protein resides in the mitochondrion inner membrane. The catalysed reaction is 4 Fe(II)-[cytochrome c] + O2 + 8 H(+)(in) = 4 Fe(III)-[cytochrome c] + 2 H2O + 4 H(+)(out). It functions in the pathway energy metabolism; oxidative phosphorylation. Component of the cytochrome c oxidase, the last enzyme in the mitochondrial electron transport chain which drives oxidative phosphorylation. The respiratory chain contains 3 multisubunit complexes succinate dehydrogenase (complex II, CII), ubiquinol-cytochrome c oxidoreductase (cytochrome b-c1 complex, complex III, CIII) and cytochrome c oxidase (complex IV, CIV), that cooperate to transfer electrons derived from NADH and succinate to molecular oxygen, creating an electrochemical gradient over the inner membrane that drives transmembrane transport and the ATP synthase. Cytochrome c oxidase is the component of the respiratory chain that catalyzes the reduction of oxygen to water. Electrons originating from reduced cytochrome c in the intermembrane space (IMS) are transferred via the dinuclear copper A center (CU(A)) of subunit 2 and heme A of subunit 1 to the active site in subunit 1, a binuclear center (BNC) formed by heme A3 and copper B (CU(B)). The BNC reduces molecular oxygen to 2 water molecules using 4 electrons from cytochrome c in the IMS and 4 protons from the mitochondrial matrix. The polypeptide is Cytochrome c oxidase subunit 1 (cox1) (Schizosaccharomyces pombe (strain 972 / ATCC 24843) (Fission yeast)).